Consider the following 497-residue polypeptide: L-arabinose isomerase (497 aa).

Residues Glu306, Glu333, His349, and His448 each contribute to the Mn(2+) site.

It belongs to the arabinose isomerase family. Mn(2+) is required as a cofactor.

The enzyme catalyses beta-L-arabinopyranose = L-ribulose. The protein operates within carbohydrate degradation; L-arabinose degradation via L-ribulose; D-xylulose 5-phosphate from L-arabinose (bacterial route): step 1/3. Catalyzes the conversion of L-arabinose to L-ribulose. This Vibrio parahaemolyticus serotype O3:K6 (strain RIMD 2210633) protein is L-arabinose isomerase.